A 180-amino-acid chain; its full sequence is Magnetosome protein MamS (180 aa).

Residues 1-21 (MDFRPDQVVARIRGAVEGALT) lie on the Cytoplasmic side of the membrane. The helical transmembrane segment at 22–42 (AQSVLGIGGALVLILVVIALL) threads the bilayer. Over 43 to 180 (PDRFTRGEGK…EGLALWMTVQ (138 aa)) the chain is Lumenal.

It belongs to the magnetosome MamS family.

It is found in the magnetosome membrane. In terms of biological role, may play a role in magnetite crystal growth and size. In Magnetospirillum gryphiswaldense (strain DSM 6361 / JCM 21280 / NBRC 15271 / MSR-1), this protein is Magnetosome protein MamS.